The primary structure comprises 177 residues: Ribosome maturation factor RimM (177 aa).

Residues 98 to 177 (DDGYYWKDLM…TIEVDWDPGF (80 aa)) enclose the PRC barrel domain.

This sequence belongs to the RimM family. As to quaternary structure, binds ribosomal protein uS19.

It localises to the cytoplasm. Its function is as follows. An accessory protein needed during the final step in the assembly of 30S ribosomal subunit, possibly for assembly of the head region. Essential for efficient processing of 16S rRNA. May be needed both before and after RbfA during the maturation of 16S rRNA. It has affinity for free ribosomal 30S subunits but not for 70S ribosomes. The chain is Ribosome maturation factor RimM from Enterobacter sp. (strain 638).